The sequence spans 438 residues: Adenylyltransferase and sulfurtransferase UBA4 (438 aa).

Residues G81, D102, 109–113 (SNLHR), K126, and 170–171 (DH) contribute to the ATP site. The Zn(2+) site is built by C212 and C215. The Glycyl thioester intermediate; for adenylyltransferase activity role is filled by C229. 2 residues coordinate Zn(2+): C290 and C293. The Rhodanese domain maps to 340 to 436 (NKKKHILIDV…WSDDVDSKIP (97 aa)). The Cysteine persulfide intermediate; for sulfurtransferase activity role is filled by C396.

This sequence in the N-terminal section; belongs to the HesA/MoeB/ThiF family. UBA4 subfamily. Requires Zn(2+) as cofactor.

It localises to the cytoplasm. Its subcellular location is the cytosol. It functions in the pathway tRNA modification; 5-methoxycarbonylmethyl-2-thiouridine-tRNA biosynthesis. Its function is as follows. Plays a central role in 2-thiolation of mcm(5)S(2)U at tRNA wobble positions of cytosolic tRNA(Lys), tRNA(Glu) and tRNA(Gln). Acts by mediating the C-terminal thiocarboxylation of sulfur carrier URM1. Its N-terminus first activates URM1 as acyl-adenylate (-COAMP), then the persulfide sulfur on the catalytic cysteine is transferred to URM1 to form thiocarboxylation (-COSH) of its C-terminus. The reaction probably involves hydrogen sulfide that is generated from the persulfide intermediate and that acts as a nucleophile towards URM1. Subsequently, a transient disulfide bond is formed. Does not use thiosulfate as sulfur donor; NFS1 probably acting as a sulfur donor for thiocarboxylation reactions. Prior mcm(5) tRNA modification by the elongator complex is required for 2-thiolation. May also be involved in protein urmylation. The chain is Adenylyltransferase and sulfurtransferase UBA4 from Candida albicans (strain SC5314 / ATCC MYA-2876) (Yeast).